A 461-amino-acid polypeptide reads, in one-letter code: Steroidogenic factor 1 (461 aa).

The nuclear receptor DNA-binding region spans 10-85; sequence DELCPVCGDK…VGMRLEAVRA (76 aa). The segment at 13-33 adopts an NR C4-type zinc-finger fold; that stretch reads CPVCGDKVSGYHYGLLTCESC. An N6-acetyllysine mark is found at lysine 34, lysine 38, and lysine 72. An NR C4-type zinc finger spans residues 49–73; sequence CTESQSCKIDKTQRKRCPFCRFQKC. A Glycyl lysine isopeptide (Lys-Gly) (interchain with G-Cter in SUMO) cross-link involves residue lysine 119. The segment at 119 to 150 is disordered; the sequence is KLETGPPMGVAPPPPPPPDYMLPPGLHAPEPK. Residues 127–139 are compositionally biased toward pro residues; it reads GVAPPPPPPPDYM. Lysine 194 is covalently cross-linked (Glycyl lysine isopeptide (Lys-Gly) (interchain with G-Cter in SUMO)). Serine 203 is subject to Phosphoserine; by CDK7. One can recognise an NR LBD domain in the interval 222–459; the sequence is GVPELIVQLL…NLLIEMLQAK (238 aa). Residues 230–461 form an important for dimerization region; the sequence is LLQLEPDEDQ…LIEMLQAKQT (232 aa). Glycine 341, tyrosine 436, and lysine 440 together coordinate a 1,2-diacyl-sn-glycero-3-phosphocholine.

Belongs to the nuclear hormone receptor family. NR5 subfamily. As to quaternary structure, binds DNA as a monomer. Part of a complex consisting of SFPQ, NONO and NR5A1. Interacts with NR0B2, NCOA2 and PPARGC1A. Interacts with DGKQ and CDK7. Binds to and activated by HIPK3. In terms of processing, acetylation stimulates the transcriptional activity. Post-translationally, sumoylation reduces CDK7-mediated phosphorylation on Ser-203. Phosphorylated on Ser-203 by CDK7. This phosphorylation promotes transcriptional activity.

It localises to the nucleus. In terms of biological role, transcriptional activator. Seems to be essential for sexual differentiation and formation of the primary steroidogenic tissues. Binds to the Ad4 site found in the promoter region of steroidogenic P450 genes such as CYP11A, CYP11B and CYP21B. Also regulates the AMH/Muellerian inhibiting substance gene as well as the AHCH and STAR genes. 5'-YCAAGGYC-3' and 5'-RRAGGTCA-3' are the consensus sequences for the recognition by NR5A1. The SFPQ-NONO-NR5A1 complex binds to the CYP17 promoter and regulates basal and cAMP-dependent transcriptional activity. Binds phosphatidylcholine and phospholipids with a phosphatidylinositol (PI) headgroup, in particular PI(3,4)P2 and PI(3,4,5)P3. Activated by the phosphorylation of NR5A1 by HIPK3 leading to increased steroidogenic gene expression upon cAMP signaling pathway stimulation. This is Steroidogenic factor 1 (NR5A1) from Sus scrofa (Pig).